Consider the following 177-residue polypeptide: Large ribosomal subunit protein uL6 (177 aa).

The disordered stretch occupies residues 151-177 (YRPPEPYKGKGIRYSDEHVVRKEAKKK). Residues 155-177 (EPYKGKGIRYSDEHVVRKEAKKK) show a composition bias toward basic and acidic residues.

It belongs to the universal ribosomal protein uL6 family. As to quaternary structure, part of the 50S ribosomal subunit.

Its function is as follows. This protein binds to the 23S rRNA, and is important in its secondary structure. It is located near the subunit interface in the base of the L7/L12 stalk, and near the tRNA binding site of the peptidyltransferase center. This chain is Large ribosomal subunit protein uL6, found in Psychrobacter sp. (strain PRwf-1).